The primary structure comprises 528 residues: uncharacterized protein (528 aa).

Positions 1–51 are disordered; it reads MEHPKRPTPKNEALHIDASGRGESSFSVHRSHSGGHEPFAPSPGSSIGASV. 2 consecutive repeat copies span residues 185 to 213 and 285 to 313. The tract at residues 185–313 is 2 X 29 AA repeats; sequence EQEEEYISNS…EEKRKLQQAL (129 aa). Disordered regions lie at residues 467–497 and 509–528; these read RAHGSSPPTVVVQPSTSRAGSNSTANINNDT and TVHPTQRATPARNERPDSHY. Residues 472–496 are compositionally biased toward polar residues; that stretch reads SPPTVVVQPSTSRAGSNSTANINND.

This is an uncharacterized protein from Caenorhabditis elegans.